A 159-amino-acid chain; its full sequence is NADH-quinone oxidoreductase subunit B (159 aa).

Positions 36, 37, 102, and 132 each coordinate [4Fe-4S] cluster.

It belongs to the complex I 20 kDa subunit family. NDH-1 is composed of 14 different subunits. Subunits NuoB, C, D, E, F, and G constitute the peripheral sector of the complex. Requires [4Fe-4S] cluster as cofactor.

The protein resides in the cell inner membrane. The catalysed reaction is a quinone + NADH + 5 H(+)(in) = a quinol + NAD(+) + 4 H(+)(out). NDH-1 shuttles electrons from NADH, via FMN and iron-sulfur (Fe-S) centers, to quinones in the respiratory chain. Couples the redox reaction to proton translocation (for every two electrons transferred, four hydrogen ions are translocated across the cytoplasmic membrane), and thus conserves the redox energy in a proton gradient. This chain is NADH-quinone oxidoreductase subunit B, found in Verminephrobacter eiseniae (strain EF01-2).